Here is a 269-residue protein sequence, read N- to C-terminus: Glutamate racemase (269 aa).

Substrate contacts are provided by residues 14 to 15 and 46 to 47; these read DS and YS. C78 (proton donor/acceptor) is an active-site residue. 79–80 is a binding site for substrate; the sequence is NT. Catalysis depends on C189, which acts as the Proton donor/acceptor. 190-191 contributes to the substrate binding site; that stretch reads TH.

It belongs to the aspartate/glutamate racemases family.

The catalysed reaction is L-glutamate = D-glutamate. It functions in the pathway cell wall biogenesis; peptidoglycan biosynthesis. Provides the (R)-glutamate required for cell wall biosynthesis. The chain is Glutamate racemase from Haemophilus influenzae (strain PittGG).